Reading from the N-terminus, the 304-residue chain is Homoserine O-acetyltransferase (304 aa).

Cys-142 serves as the catalytic Acyl-thioester intermediate. Substrate is bound by residues Lys-163 and Ser-191. The active-site Proton acceptor is the His-234. Glu-236 is an active-site residue. Substrate is bound at residue Arg-248.

Belongs to the MetA family.

It localises to the cytoplasm. It catalyses the reaction L-homoserine + acetyl-CoA = O-acetyl-L-homoserine + CoA. It functions in the pathway amino-acid biosynthesis; L-methionine biosynthesis via de novo pathway; O-acetyl-L-homoserine from L-homoserine: step 1/1. Transfers an acetyl group from acetyl-CoA to L-homoserine, forming acetyl-L-homoserine. In Thermotoga petrophila (strain ATCC BAA-488 / DSM 13995 / JCM 10881 / RKU-1), this protein is Homoserine O-acetyltransferase.